The following is a 358-amino-acid chain: Heat-inducible transcription repressor HrcA (358 aa).

This sequence belongs to the HrcA family.

In terms of biological role, negative regulator of class I heat shock genes (grpE-dnaK-dnaJ and groELS operons). Prevents heat-shock induction of these operons. The protein is Heat-inducible transcription repressor HrcA of Caulobacter vibrioides (strain NA1000 / CB15N) (Caulobacter crescentus).